The sequence spans 297 residues: Homoserine kinase (297 aa).

Position 84–94 (84–94) interacts with ATP; sequence PPARGLGSSAT.

It belongs to the GHMP kinase family. Homoserine kinase subfamily.

The protein localises to the cytoplasm. It carries out the reaction L-homoserine + ATP = O-phospho-L-homoserine + ADP + H(+). It participates in amino-acid biosynthesis; L-threonine biosynthesis; L-threonine from L-aspartate: step 4/5. In terms of biological role, catalyzes the ATP-dependent phosphorylation of L-homoserine to L-homoserine phosphate. This chain is Homoserine kinase (thrB), found in Aquifex aeolicus (strain VF5).